The sequence spans 218 residues: Octanoyltransferase (218 aa).

Positions 27–210 (TGGEDTLYLV…QFLAIFTHPA (184 aa)) constitute a BPL/LPL catalytic domain. Residues 72-79 (RGGNITCH), 139-141 (SIG), and 152-154 (GLA) each bind substrate. Residue C170 is the Acyl-thioester intermediate of the active site.

The protein belongs to the LipB family.

Its subcellular location is the cytoplasm. The catalysed reaction is octanoyl-[ACP] + L-lysyl-[protein] = N(6)-octanoyl-L-lysyl-[protein] + holo-[ACP] + H(+). It functions in the pathway protein modification; protein lipoylation via endogenous pathway; protein N(6)-(lipoyl)lysine from octanoyl-[acyl-carrier-protein]: step 1/2. Functionally, catalyzes the transfer of endogenously produced octanoic acid from octanoyl-acyl-carrier-protein onto the lipoyl domains of lipoate-dependent enzymes. Lipoyl-ACP can also act as a substrate although octanoyl-ACP is likely to be the physiological substrate. This chain is Octanoyltransferase, found in Nitratidesulfovibrio vulgaris (strain ATCC 29579 / DSM 644 / CCUG 34227 / NCIMB 8303 / VKM B-1760 / Hildenborough) (Desulfovibrio vulgaris).